Here is an 817-residue protein sequence, read N- to C-terminus: DNA-directed RNA polymerase subunit beta'' (817 aa).

C219, C291, C298, and C301 together coordinate Zn(2+).

It belongs to the RNA polymerase beta' chain family. RpoC2 subfamily. As to quaternary structure, in plastids the minimal PEP RNA polymerase catalytic core is composed of four subunits: alpha, beta, beta', and beta''. When a (nuclear-encoded) sigma factor is associated with the core the holoenzyme is formed, which can initiate transcription. Requires Zn(2+) as cofactor.

It is found in the plastid. The enzyme catalyses RNA(n) + a ribonucleoside 5'-triphosphate = RNA(n+1) + diphosphate. Functionally, DNA-dependent RNA polymerase catalyzes the transcription of DNA into RNA using the four ribonucleoside triphosphates as substrates. This Euglena longa (Euglenophycean alga) protein is DNA-directed RNA polymerase subunit beta'' (rpoC2).